The following is a 417-amino-acid chain: Envelope glycoprotein D (417 aa).

The N-terminal stretch at 1–18 (MQGPTLAVLGALLAVAVS) is a signal peptide. At 19-360 (LPTPAPRVTV…APATPAAPDA (342 aa)) the chain is on the virion surface side. N-linked (GlcNAc...) asparagine; by host glycans are attached at residues Asn41 and Asn102. 3 disulfide bridges follow: Cys75–Cys197, Cys114–Cys213, and Cys126–Cys135. The tract at residues 259 to 355 (EESKGYEPPP…THPPPAPATP (97 aa)) is disordered. Over residues 279–292 (GDDEAREDEGETED) the composition is skewed to acidic residues. A helical transmembrane segment spans residues 361–389 (VPVGVGIGIAAAAIACVAAAAAGAYFVYT). The Intravirion portion of the chain corresponds to 390 to 417 (RRRGAGPLPRKPKKLPAFGNVNYSALPG).

It belongs to the herpesviridae glycoprotein D family.

Its subcellular location is the virion membrane. In terms of biological role, envelope glycoprotein that binds to host cell entry receptors, promoting the virus entry into host cells. May trigger fusion with host membrane, by recruiting the fusion machinery composed of gB and gH/gL. This is Envelope glycoprotein D (gD) from Bovine herpesvirus 1.2 (strain ST) (BoHV-1).